Reading from the N-terminus, the 258-residue chain is Adenosylcobinamide-GDP ribazoletransferase (258 aa).

6 helical membrane passes run 41–61 (FFPLVGWLVGAAGALAYWLAS), 65–85 (PAPGVAVAASMAATLLLTGAF), 115–135 (IGAFGAIAVCMALLLKWQLLM), 136–156 (AMAAQHAAAAMAAMVAAHAAS), 197–217 (LPLLGFGMACAAIAVAVLLAA), and 236–256 (CLGLAQQVFELLVLWVLLAWT).

The protein belongs to the CobS family. It depends on Mg(2+) as a cofactor.

It localises to the cell inner membrane. It catalyses the reaction alpha-ribazole + adenosylcob(III)inamide-GDP = adenosylcob(III)alamin + GMP + H(+). The catalysed reaction is alpha-ribazole 5'-phosphate + adenosylcob(III)inamide-GDP = adenosylcob(III)alamin 5'-phosphate + GMP + H(+). It functions in the pathway cofactor biosynthesis; adenosylcobalamin biosynthesis; adenosylcobalamin from cob(II)yrinate a,c-diamide: step 7/7. Joins adenosylcobinamide-GDP and alpha-ribazole to generate adenosylcobalamin (Ado-cobalamin). Also synthesizes adenosylcobalamin 5'-phosphate from adenosylcobinamide-GDP and alpha-ribazole 5'-phosphate. The protein is Adenosylcobinamide-GDP ribazoletransferase of Ralstonia nicotianae (strain ATCC BAA-1114 / GMI1000) (Ralstonia solanacearum).